The sequence spans 199 residues: TATA-box-binding protein (199 aa).

2 consecutive repeat copies span residues 10 to 86 (IENI…VKLL) and 101 to 177 (IQNI…YNQL).

The protein belongs to the TBP family.

Its function is as follows. General factor that plays a role in the activation of archaeal genes transcribed by RNA polymerase. Binds specifically to the TATA box promoter element which lies close to the position of transcription initiation. The sequence is that of TATA-box-binding protein from Pyrobaculum aerophilum (strain ATCC 51768 / DSM 7523 / JCM 9630 / CIP 104966 / NBRC 100827 / IM2).